The primary structure comprises 499 residues: Aldehyde dehydrogenase 1 (499 aa).

NAD(+) is bound by residues 164–166, 164–167, 190–193, 223–224, 243–244, 243–248, and 266–268; these read IPW, IPWN, KPAE, GS, GSTKVG, and ELG. Catalysis depends on Glu266, which acts as the Proton acceptor. The active-site Nucleophile is the Cys300. Residues 346 to 350 and 397 to 399 contribute to the NAD(+) site; these read QQYEK and EIF.

Belongs to the aldehyde dehydrogenase family. Homotetramer. In terms of tissue distribution, expressed in flowers and disk florets.

It catalyses the reaction an aldehyde + NAD(+) + H2O = a carboxylate + NADH + 2 H(+). It carries out the reaction an aldehyde + NADP(+) + H2O = a carboxylate + NADPH + 2 H(+). The enzyme catalyses octanal + NADP(+) + H2O = octanoate + NADPH + 2 H(+). The catalysed reaction is (1R,3R)-chrysanthemal + NAD(+) + H2O = (1R,3R)-chrysanthemate + NADH + 2 H(+). It catalyses the reaction (1R,3R)-chrysanthemal + NADP(+) + H2O = (1R,3R)-chrysanthemate + NADPH + 2 H(+). It carries out the reaction (E)-hept-2-enal + NADP(+) + H2O = (E)-hept-2-enoate + NADPH + 2 H(+). The enzyme catalyses dodecanal + NADP(+) + H2O = dodecanoate + NADPH + 2 H(+). The catalysed reaction is citral + NADP(+) + H2O = 3,7-dimethylocta-2,6-dienoate + NADPH + 2 H(+). It catalyses the reaction perillyl aldehyde + NADP(+) + H2O = perillate + NADPH + 2 H(+). It carries out the reaction (2E,6E)-farnesal + NADP(+) + H2O = (2E,6E)-farnesoate + NADPH + 2 H(+). The enzyme catalyses (S)-(-)-citronellal + NADP(+) + H2O = (S)-(-)-citronellate + NADPH + 2 H(+). It participates in isoprenoid biosynthesis. Functionally, component of the monoterpenoid pyrethrins biosynthesis; pyrethrins are widely used plant-derived pesticide. Mediates the conversion of trans-chrysanthemal into trans-chrysanthemic acid. Can also use octanal, hept-2-enal, dodecanal, citral, farnesal, citronellal and perillyl aldehyde as substrates. This is Aldehyde dehydrogenase 1 from Tanacetum cinerariifolium (Dalmatian daisy).